Here is a 100-residue protein sequence, read N- to C-terminus: Ubiquitin-related modifier 1 homolog (100 aa).

Gly-100 carries the post-translational modification 1-thioglycine. Gly-100 participates in a covalent cross-link: Glycyl lysine isopeptide (Gly-Lys) (interchain with K-? in acceptor proteins).

This sequence belongs to the URM1 family. C-terminal thiocarboxylation occurs in 2 steps, it is first acyl-adenylated (-COAMP) via the hesA/moeB/thiF part of the MOCS3 homolog, then thiocarboxylated (-COSH) via the rhodanese domain of the MOCS3 homolog.

The protein localises to the cytoplasm. It participates in tRNA modification; 5-methoxycarbonylmethyl-2-thiouridine-tRNA biosynthesis. In terms of biological role, acts as a sulfur carrier required for 2-thiolation of mcm(5)S(2)U at tRNA wobble positions of cytosolic tRNA(Lys), tRNA(Glu) and tRNA(Gln). Serves as sulfur donor in tRNA 2-thiolation reaction by being thiocarboxylated (-COSH) at its C-terminus by MOCS3. The sulfur is then transferred to tRNA to form 2-thiolation of mcm(5)S(2)U. Also acts as a ubiquitin-like protein (UBL) that is covalently conjugated via an isopeptide bond to lysine residues of target proteins. The thiocarboxylated form serves as substrate for conjugation and oxidative stress specifically induces the formation of UBL-protein conjugates. In Caenorhabditis elegans, this protein is Ubiquitin-related modifier 1 homolog.